Here is a 245-residue protein sequence, read N- to C-terminus: Exosome complex component RRP41 (245 aa).

Ala-2 is modified (N-acetylalanine).

Belongs to the RNase PH family. As to quaternary structure, component of the RNA exosome core complex (Exo-9), composed of EXOSC1, EXOSC2, EXOSC3, EXOSC4, EXOSC5, EXOSC6, EXOSC7, EXOSC8 and EXOSC9; within the complex interacts with EXOSC2, EXOSC7 and EXOSC9. The catalytically inactive RNA exosome core complex (Exo-9) associates with the catalytic subunit EXOSC10/RRP6. Exo-9 may associate with DIS3 to form the nucleolar exosome complex, or DIS3L to form the cytoplasmic exosome complex. Exo-9 is formed by a hexameric base ring consisting of the heterodimers EXOSC4-EXOSC9, EXOSC5-EXOSC8 and EXOSC6-EXOSC7, and a cap ring consisting of EXOSC1, EXOSC2 and EXOSC3. The RNA exosome complex associates with cofactors C1D/RRP47, MPHOSPH6/MPP6 and MTREX/MTR4. Interacts with DDX60. Interacts with DIS3; the interaction is direct.

The protein localises to the cytoplasm. Its subcellular location is the nucleus. It localises to the nucleolus. It is found in the nucleoplasm. Non-catalytic component of the RNA exosome complex which has 3'-&gt;5' exoribonuclease activity and participates in a multitude of cellular RNA processing and degradation events. In the nucleus, the RNA exosome complex is involved in proper maturation of stable RNA species such as rRNA, snRNA and snoRNA, in the elimination of RNA processing by-products and non-coding 'pervasive' transcripts, such as antisense RNA species and promoter-upstream transcripts (PROMPTs), and of mRNAs with processing defects, thereby limiting or excluding their export to the cytoplasm. The RNA exosome may be involved in Ig class switch recombination (CSR) and/or Ig variable region somatic hypermutation (SHM) by targeting AICDA deamination activity to transcribed dsDNA substrates. In the cytoplasm, the RNA exosome complex is involved in general mRNA turnover and specifically degrades inherently unstable mRNAs containing AU-rich elements (AREs) within their 3' untranslated regions, and in RNA surveillance pathways, preventing translation of aberrant mRNAs. It seems to be involved in degradation of histone mRNA. The catalytic inactive RNA exosome core complex of 9 subunits (Exo-9) is proposed to play a pivotal role in the binding and presentation of RNA for ribonucleolysis, and to serve as a scaffold for the association with catalytic subunits and accessory proteins or complexes. EXOSC4 binds to ARE-containing RNAs. The polypeptide is Exosome complex component RRP41 (EXOSC4) (Bos taurus (Bovine)).